Here is a 595-residue protein sequence, read N- to C-terminus: Protein halfway (595 aa).

2 disordered regions span residues 1 to 42 and 64 to 98; these read MLLT…ADDE and TGAA…PLLP. N-linked (GlcNAc...) asparagine glycosylation is found at asparagine 250 and asparagine 255. An LRRNT domain is found at 347–402; it reads ESTKRCMTKCPVIPNYGSCKCRFESIMIIQDDQSKPKCHVDCSNLGLVELPPRLPD. 3 LRR repeats span residues 403–424, 429–450, and 454–475; these read NTFV…FQTN, NINR…EGTK, and NFQR…FLNN. The LRRCT domain occupies 489–538; it reads NKLQCDCNSAKTLQNWLKERSTDIPDYMEIRCRNIPQSVIELQEAKLCQS.

Its function is as follows. Has a role in the ecdysone induced cascade; probably indirect control of 'late' ecdysone genes. This chain is Protein halfway (hfw), found in Drosophila pseudoobscura pseudoobscura (Fruit fly).